A 212-amino-acid polypeptide reads, in one-letter code: MRTTTRRAPRVGIGGPVGSGKTMLCLKLCQRLRERLSMAVVTNDIYCSEDAQFLIRQSALPAARIAGVETGGCPHTAIRDDTTMNEQACRALEATFPELDLLLVESGGDNLTATFSPELVDAFIYVIDVAEGDKIPRKGGPAIRFSDLLIINKVDLAPLVGADLEVMARDATAQRGGRPFLLCDLKREHNLDAVIGWLEREVLFARTAAPVG.

A GTP-binding site is contributed by 15-22 (GPVGSGKT).

Belongs to the SIMIBI class G3E GTPase family. UreG subfamily. Homodimer. UreD, UreF and UreG form a complex that acts as a GTP-hydrolysis-dependent molecular chaperone, activating the urease apoprotein by helping to assemble the nickel containing metallocenter of UreC. The UreE protein probably delivers the nickel.

The protein resides in the cytoplasm. Functionally, facilitates the functional incorporation of the urease nickel metallocenter. This process requires GTP hydrolysis, probably effectuated by UreG. In Opitutus terrae (strain DSM 11246 / JCM 15787 / PB90-1), this protein is Urease accessory protein UreG.